We begin with the raw amino-acid sequence, 306 residues long: Phosphoribosylaminoimidazole-succinocarboxamide synthase (306 aa).

S2 bears the N-acetylserine mark.

The protein belongs to the SAICAR synthetase family. Monomer.

The enzyme catalyses 5-amino-1-(5-phospho-D-ribosyl)imidazole-4-carboxylate + L-aspartate + ATP = (2S)-2-[5-amino-1-(5-phospho-beta-D-ribosyl)imidazole-4-carboxamido]succinate + ADP + phosphate + 2 H(+). Its pathway is purine metabolism; IMP biosynthesis via de novo pathway; 5-amino-1-(5-phospho-D-ribosyl)imidazole-4-carboxamide from 5-amino-1-(5-phospho-D-ribosyl)imidazole-4-carboxylate: step 1/2. Its function is as follows. Catalyzes the reaction of 4-carboxy-5-aminoimidazole ribotide (CAIR) and aspartic acid with the formation of N-succinyl-5-amino-imidazole-4-carboxamide ribotide (SAICAR) in the purine biosynthesis pathway. The protein is Phosphoribosylaminoimidazole-succinocarboxamide synthase (ADE1) of Saccharomyces cerevisiae (strain ATCC 204508 / S288c) (Baker's yeast).